Here is a 584-residue protein sequence, read N- to C-terminus: Methionine--tRNA ligase (584 aa).

The short motif at 12–22 (PYANGDLHLGH) is the 'HIGH' region element. Residues Cys-144, Cys-147, Cys-157, and Cys-160 each contribute to the Zn(2+) site. A 'KMSKS' region motif is present at residues 334–338 (QFSTS). Thr-337 is a binding site for ATP. A disordered region spans residues 541 to 563 (EGRDRWAPSELEAGRPLPPPQPL).

Belongs to the class-I aminoacyl-tRNA synthetase family. MetG type 1 subfamily. As to quaternary structure, monomer. It depends on Zn(2+) as a cofactor.

It localises to the cytoplasm. It catalyses the reaction tRNA(Met) + L-methionine + ATP = L-methionyl-tRNA(Met) + AMP + diphosphate. Is required not only for elongation of protein synthesis but also for the initiation of all mRNA translation through initiator tRNA(fMet) aminoacylation. The polypeptide is Methionine--tRNA ligase (Thermomicrobium roseum (strain ATCC 27502 / DSM 5159 / P-2)).